The following is a 318-amino-acid chain: MRPVEVLGKRWAHPIACASGALAAHRPGMENAVLRGAAAIFTKTVTESPREGHPGPVFVDYLDEGYALNAMGLPNPGPDRMVVEIEEFRDEFDVPVYASVAADGPEGFKRLARAFSGVADGLELNVSCPHAGKGYGAELGSDPEAVAEITEAAVRAFDGPVSVKLTPNVDRETLLEVAAAAIDAGAEALTAVNTLGPGLRIDLRTASPVLGAGVGGLSGPALKPIALRVVADLALEFGEEVEIIGVGGIRNGEDVVEFLFAGAKAVQVATAAREKDFGDIAMETSHILKELGYDGPEEAIGAALPEYRERLRRLGWCQ.

FMN contacts are provided by residues serine 19 and 43–44 (KT). Residues lysine 43, 69-73 (NAMGL), and asparagine 125 each bind substrate. Asparagine 125 contacts FMN. The Nucleophile role is filled by cysteine 128. Lysine 164 and valine 192 together coordinate FMN. Position 193–194 (193–194 (NT)) interacts with substrate. Residues glycine 219, 247-248 (GG), and 269-270 (AT) contribute to the FMN site.

The protein belongs to the dihydroorotate dehydrogenase family. Type 1 subfamily. In terms of assembly, heterotetramer of 2 PyrK and 2 PyrD type B subunits. FMN is required as a cofactor.

Its subcellular location is the cytoplasm. It catalyses the reaction (S)-dihydroorotate + NAD(+) = orotate + NADH + H(+). The protein operates within pyrimidine metabolism; UMP biosynthesis via de novo pathway; orotate from (S)-dihydroorotate (NAD(+) route): step 1/1. Functionally, catalyzes the conversion of dihydroorotate to orotate with NAD(+) as electron acceptor. This chain is Dihydroorotate dehydrogenase B (NAD(+)), catalytic subunit (pyrD), found in Methanopyrus kandleri (strain AV19 / DSM 6324 / JCM 9639 / NBRC 100938).